We begin with the raw amino-acid sequence, 322 residues long: Sulfate adenylyltransferase subunit 2 (322 aa).

The protein belongs to the PAPS reductase family. CysD subfamily. As to quaternary structure, heterodimer composed of CysD, the smaller subunit, and CysN.

It carries out the reaction sulfate + ATP + H(+) = adenosine 5'-phosphosulfate + diphosphate. It participates in sulfur metabolism; hydrogen sulfide biosynthesis; sulfite from sulfate: step 1/3. Its function is as follows. With CysN forms the ATP sulfurylase (ATPS) that catalyzes the adenylation of sulfate producing adenosine 5'-phosphosulfate (APS) and diphosphate, the first enzymatic step in sulfur assimilation pathway. APS synthesis involves the formation of a high-energy phosphoric-sulfuric acid anhydride bond driven by GTP hydrolysis by CysN coupled to ATP hydrolysis by CysD. The chain is Sulfate adenylyltransferase subunit 2 from Bradyrhizobium sp. (strain BTAi1 / ATCC BAA-1182).